Consider the following 120-residue polypeptide: Large ribosomal subunit protein uL18 (120 aa).

It belongs to the universal ribosomal protein uL18 family. Part of the 50S ribosomal subunit; part of the 5S rRNA/L5/L18/L25 subcomplex. Contacts the 5S and 23S rRNAs.

Functionally, this is one of the proteins that bind and probably mediate the attachment of the 5S RNA into the large ribosomal subunit, where it forms part of the central protuberance. The chain is Large ribosomal subunit protein uL18 from Geobacillus sp. (strain WCH70).